Here is a 433-residue protein sequence, read N- to C-terminus: Ectonucleoside triphosphate diphosphohydrolase 5 (433 aa).

The first 24 residues, Met-1 to Arg-24, serve as a signal peptide directing secretion. The Proton acceptor role is filled by Glu-172. N-linked (GlcNAc...) asparagine glycosylation occurs at Asn-232. 2 cysteine pairs are disulfide-bonded: Cys-272–Cys-308 and Cys-368–Cys-382.

It belongs to the GDA1/CD39 NTPase family. In terms of assembly, monomer; active form. Homodimer; disulfide-linked. Homodimers are enzymatically inactive. Requires Ca(2+) as cofactor. Mg(2+) serves as cofactor. Post-translationally, N-glycosylated; high-mannose type.

It localises to the endoplasmic reticulum. The protein localises to the secreted. The catalysed reaction is a ribonucleoside 5'-diphosphate + H2O = a ribonucleoside 5'-phosphate + phosphate + H(+). It catalyses the reaction GDP + H2O = GMP + phosphate + H(+). It carries out the reaction UDP + H2O = UMP + phosphate + H(+). The enzyme catalyses IDP + H2O = IMP + phosphate + H(+). The catalysed reaction is CDP + H2O = CMP + phosphate + H(+). It catalyses the reaction ADP + H2O = AMP + phosphate + H(+). It participates in protein modification; protein glycosylation. Its function is as follows. Hydrolyzes nucleoside diphosphates with a preference for GDP, IDP and UDP compared to ADP and CDP. In the lumen of the endoplasmic reticulum, hydrolyzes UDP that acts as an end-product feedback inhibitor of the UDP-Glc:glycoprotein glucosyltransferases. UMP can be transported back by an UDP-sugar antiporter to the cytosol where it is consumed to regenerate UDP-glucose. Therefore, it positively regulates protein reglucosylation by clearing UDP from the ER lumen and by promoting the regeneration of UDP-glucose. Protein reglucosylation is essential to proper glycoprotein folding and quality control in the ER. This chain is Ectonucleoside triphosphate diphosphohydrolase 5 (ENTPD5), found in Ailuropoda melanoleuca (Giant panda).